The chain runs to 156 residues: Aspercryptin biosynthesis cluster protein B (156 aa).

The signal sequence occupies residues 1-39 (MRMANRIGAGRKSALQLSHLRTRLTSSAAAVATAPTLDP).

The protein belongs to the YciI family.

It functions in the pathway secondary metabolite biosynthesis. Functionally, part of the gene cluster that mediates the biosynthesis of aspercryptins, linear lipopeptides built from six amino acids including 2 highly unusual and nonproteogenic amino acids, 2-amino-octanoic acid (2aoa) and 2-amino-dodecanol (2adol). The core structure of aspercryptins is as follows: Ser/Ala-Thr-Ile/Val-2aoa-Aasn-2adol. The first step of aspercryptin biosynthesis is the generation of the fatty acid precursors, octanoic and dodecanoic acids, by the FAS subunits atnF and atnM. The fatty acid precursors are likely transformed into the corresponding alpha-amino fatty acids in three steps. First, they are hydroxylated by the cytochrome P450 monooxygenase atnE, then oxidized to the corresponding alpha-keto acids by the NAD(P)-dependent oxidoreductase atnD, and finally converted to the alpha-amino fatty acids by the PLP-dependent aminotransferases atnH or atnJ. the alpha-amino fatty acids, 2-amino-octanoic and 2-amino-dodecanoic acids, are recognized, activated, and covalently tethered to the NRPS atnA by its fourth and sixth adenylation domains. The second module of atnA is the Thr module and contains an epimerase (E) domain responsible for the epimerization of Thr to D-allo-Thr. Additionally, despite atnA having only one epimerase domain, the first amino acid of aspercryptin A1 is D-Ser, suggesting that serine is either loaded directly as D-Ser on the first module or that the epimerase domain in the threonine module epimerizes both L-Ser and L-Thr. After condensation of the hexapeptide of aspercryptin, the C-terminal reductase (TE) domain might be involved in the reductive release and production of the aldehyde hexapeptide. Further reduction would generate aspercryptins. The variety of aspercryptins produced reflects the flexibility of the atnA NRPS, allowing incorporation of alanine instead of serine, valine for isoleucine, and a C10 fatty amino alcohol instead of the C12 version. AtnB seems to be involved in the selectivity for Ile versus Val by the third module. Moreover, type B, C and D aspercryptins have an additional N-terminal cichorine, acetyl and propionyl group respectively. The protein is Aspercryptin biosynthesis cluster protein B of Emericella nidulans (strain FGSC A4 / ATCC 38163 / CBS 112.46 / NRRL 194 / M139) (Aspergillus nidulans).